A 513-amino-acid chain; its full sequence is DNA damage response protein kinase DUN1 (513 aa).

Basic and acidic residues predominate over residues 1–12 (MSLSTKREHSGD). The segment at 1–29 (MSLSTKREHSGDVTDSSFKRQQRSNKPSS) is disordered. Ser10 is subject to Phosphoserine. The 57-residue stretch at 56–112 (TTIGRSRSCDVILSEPDISTFHAEFHLLQMDVDNFQRNLINVIDKSRNGTFINGNRL) folds into the FHA domain. A Phosphoserine modification is found at Ser139. Residues 200–480 (YLLGKELGAG…IDEALNHPWF (281 aa)) form the Protein kinase domain. ATP is bound by residues 206–214 (LGAGHYALV) and Lys229. The Proton acceptor role is filled by Asp328. At Thr380 the chain carries Phosphothreonine.

The protein belongs to the protein kinase superfamily. CAMK Ser/Thr protein kinase family. CHEK2 subfamily. As to quaternary structure, interacts with the PAB-dependent poly(A)-nuclease (PAN) complex regulatory subunit PAN3 via its forkhead-associated (FHA) domain. Autophosphorylation increases in response to DNA damage.

It localises to the nucleus. The catalysed reaction is L-seryl-[protein] + ATP = O-phospho-L-seryl-[protein] + ADP + H(+). It carries out the reaction L-threonyl-[protein] + ATP = O-phospho-L-threonyl-[protein] + ADP + H(+). Functionally, transducer of the DNA damage signal. Phosphorylates SML1 on serine residues. Cooperates with the PAN deadenylation complex in the regulation of RAD5 mRNA levels and cell survival in response to replicational stress. The sequence is that of DNA damage response protein kinase DUN1 (DUN1) from Saccharomyces cerevisiae (strain ATCC 204508 / S288c) (Baker's yeast).